The primary structure comprises 321 residues: Glucokinase (321 aa).

Gly-10–Thr-15 lines the ATP pocket.

This sequence belongs to the bacterial glucokinase family.

It is found in the cytoplasm. It catalyses the reaction D-glucose + ATP = D-glucose 6-phosphate + ADP + H(+). This chain is Glucokinase, found in Marinobacter nauticus (strain ATCC 700491 / DSM 11845 / VT8) (Marinobacter aquaeolei).